Consider the following 392-residue polypeptide: Proteasomal ATPase-associated factor 1 (392 aa).

The residue at position 2 (A2) is an N-acetylalanine. WD repeat units lie at residues I90–V129, G132–T171, G174–A215, I278–Q316, and A360–L392.

This sequence belongs to the WD repeat PAAF1/RPN14 family. Interacts with PSMC1, PSMC2, PSMC3, PSMC4, PSMC5 and PSMC6. Interacts with SUPT6H.

Functionally, inhibits proteasome 26S assembly and activity by impairing the association of the 19S regulatory complex with the 20S core. Protects SUPT6H from proteasomal degradation. The polypeptide is Proteasomal ATPase-associated factor 1 (PAAF1) (Bos taurus (Bovine)).